We begin with the raw amino-acid sequence, 335 residues long: Dihydroorotate dehydrogenase (quinone) (335 aa).

Residues 58-62 (AGADK) and Thr-82 contribute to the FMN site. Lys-62 provides a ligand contact to substrate. A substrate-binding site is contributed by 107–111 (NRNGF). The FMN site is built by Asn-135 and Asn-168. Asn-168 provides a ligand contact to substrate. Ser-171 (nucleophile) is an active-site residue. Asn-173 contacts substrate. Positions 213 and 241 each coordinate FMN. Position 242–243 (242–243 (NT)) interacts with substrate. FMN contacts are provided by residues Gly-264, Gly-293, and 314–315 (YS).

The protein belongs to the dihydroorotate dehydrogenase family. Type 2 subfamily. As to quaternary structure, monomer. Requires FMN as cofactor.

The protein localises to the cell membrane. It catalyses the reaction (S)-dihydroorotate + a quinone = orotate + a quinol. The protein operates within pyrimidine metabolism; UMP biosynthesis via de novo pathway; orotate from (S)-dihydroorotate (quinone route): step 1/1. Catalyzes the conversion of dihydroorotate to orotate with quinone as electron acceptor. The protein is Dihydroorotate dehydrogenase (quinone) of Actinobacillus pleuropneumoniae serotype 3 (strain JL03).